A 436-amino-acid chain; its full sequence is p-aminobenzoyl-glutamate hydrolase subunit A (436 aa).

It belongs to the peptidase M20 family. In terms of assembly, forms a heterodimer with AbgB. It depends on Mn(2+) as a cofactor.

Its function is as follows. Component of the p-aminobenzoyl-glutamate hydrolase multicomponent enzyme system which catalyzes the cleavage of p-aminobenzoyl-glutamate (PABA-GLU) to form p-aminobenzoate (PABA) and glutamate. AbgAB does not degrade dipeptides and the physiological role of abgABT should be clarified. This Escherichia coli (strain K12) protein is p-aminobenzoyl-glutamate hydrolase subunit A (abgA).